A 475-amino-acid chain; its full sequence is Sensor histidine kinase QseE (475 aa).

At 1-13 (MKRWPVFPRSLRQ) the chain is on the cytoplasmic side. Residues 14-34 (LVMLAFLLILLPLLVLAWQAW) traverse the membrane as a helical segment. At 35–173 (QSLNALSDQA…LQREIAERGQ (139 aa)) the chain is on the periplasmic side. Residues 174-194 (YFGWQSLVLFLVSLVMVLLFT) form a helical membrane-spanning segment. The Cytoplasmic portion of the chain corresponds to 195–475 (RMIIGPVKNI…IELPSSKNTK (281 aa)). Residues 256–472 (HLSHELKTPL…CFRIELPSSK (217 aa)) enclose the Histidine kinase domain. H259 carries the phosphohistidine; by autocatalysis modification.

Post-translationally, autophosphorylated.

Its subcellular location is the cell inner membrane. The enzyme catalyses ATP + protein L-histidine = ADP + protein N-phospho-L-histidine.. In terms of biological role, member of the two-component regulatory system QseF/QseE involved in the regulation of virulence and metabolism in EHEC. Required for pedestal formation in host epithelial cells during infection. Autophosphorylates in response to epinephrine, sulfate or phosphate and then probably transfers its phosphate group to QseF. The protein is Sensor histidine kinase QseE (qseE) of Escherichia coli O157:H7.